The sequence spans 29 residues: Dermaseptin-J5 (29 aa).

The residue at position 29 (Val29) is a Valine amide.

Expressed by the skin glands.

It is found in the secreted. Its function is as follows. Has antimicrobial activity. The protein is Dermaseptin-J5 of Phasmahyla jandaia (Jandaia leaf frog).